We begin with the raw amino-acid sequence, 452 residues long: tRNA modification GTPase MnmE (452 aa).

Residues Arg-21, Glu-82, and Arg-121 each coordinate (6S)-5-formyl-5,6,7,8-tetrahydrofolate. Positions 217 to 373 constitute a TrmE-type G domain; the sequence is GINTTIIGKP…LENKIIEMFN (157 aa). Asn-227 serves as a coordination point for K(+). Residues 227 to 232, 246 to 252, and 271 to 274 contribute to the GTP site; these read NVGKSS, TDIPGTT, and DTAG. Ser-231 contributes to the Mg(2+) binding site. K(+)-binding residues include Thr-246, Ile-248, and Thr-251. Thr-252 provides a ligand contact to Mg(2+). Residue Lys-452 coordinates (6S)-5-formyl-5,6,7,8-tetrahydrofolate.

Belongs to the TRAFAC class TrmE-Era-EngA-EngB-Septin-like GTPase superfamily. TrmE GTPase family. Homodimer. Heterotetramer of two MnmE and two MnmG subunits. Requires K(+) as cofactor.

It localises to the cytoplasm. Functionally, exhibits a very high intrinsic GTPase hydrolysis rate. Involved in the addition of a carboxymethylaminomethyl (cmnm) group at the wobble position (U34) of certain tRNAs, forming tRNA-cmnm(5)s(2)U34. The sequence is that of tRNA modification GTPase MnmE from Finegoldia magna (strain ATCC 29328 / DSM 20472 / WAL 2508) (Peptostreptococcus magnus).